Here is a 277-residue protein sequence, read N- to C-terminus: Acyl-coenzyme A thioesterase MBLAC2 (277 aa).

Residues histidine 80, histidine 82, aspartate 84, histidine 85, histidine 167, aspartate 186, and histidine 228 each contribute to the Zn(2+) site.

It belongs to the metallo-beta-lactamase superfamily. Glyoxalase II family. It depends on Zn(2+) as a cofactor.

It localises to the endoplasmic reticulum membrane. The protein localises to the cell membrane. It carries out the reaction hexadecanoyl-CoA + H2O = hexadecanoate + CoA + H(+). It catalyses the reaction dodecanoyl-CoA + H2O = dodecanoate + CoA + H(+). The enzyme catalyses tetradecanoyl-CoA + H2O = tetradecanoate + CoA + H(+). The catalysed reaction is octadecanoyl-CoA + H2O = octadecanoate + CoA + H(+). It carries out the reaction a beta-lactam + H2O = a substituted beta-amino acid. In terms of biological role, acyl-CoA thioesterases are a group of enzymes that catalyze the hydrolysis of acyl-CoAs to the free fatty acid and coenzyme A (CoASH), providing the potential to regulate intracellular levels of acyl-CoAs, free fatty acids and CoASH. Has an acyl-CoA thioesterase activity towards the long chain fatty acyl-CoA thioester palmitoyl-CoA (hexadecanoyl-CoA; C16:0-CoA). Displays a substrate preference for fatty acyl-CoAs with chain-lengths C12-C18. The chain is Acyl-coenzyme A thioesterase MBLAC2 (MBLAC2) from Gallus gallus (Chicken).